Reading from the N-terminus, the 486-residue chain is Pup--protein ligase (486 aa).

Glu33 is a binding site for Mg(2+). Arg76 is an ATP binding site. Position 78 (Tyr78) interacts with Mg(2+). The Proton acceptor role is filled by Asp80. Glu86 is a binding site for Mg(2+). ATP contacts are provided by Thr89 and Trp451.

Belongs to the Pup ligase/Pup deamidase family. Pup-conjugating enzyme subfamily.

The catalysed reaction is ATP + [prokaryotic ubiquitin-like protein]-L-glutamate + [protein]-L-lysine = ADP + phosphate + N(6)-([prokaryotic ubiquitin-like protein]-gamma-L-glutamyl)-[protein]-L-lysine.. It functions in the pathway protein degradation; proteasomal Pup-dependent pathway. Its pathway is protein modification; protein pupylation. Its function is as follows. Catalyzes the covalent attachment of the prokaryotic ubiquitin-like protein modifier Pup to the proteasomal substrate proteins, thereby targeting them for proteasomal degradation. This tagging system is termed pupylation. The ligation reaction involves the side-chain carboxylate of the C-terminal glutamate of Pup and the side-chain amino group of a substrate lysine. The protein is Pup--protein ligase of Bifidobacterium longum (strain NCC 2705).